Reading from the N-terminus, the 103-residue chain is Large ribosomal subunit protein bL21 (103 aa).

Belongs to the bacterial ribosomal protein bL21 family. As to quaternary structure, part of the 50S ribosomal subunit. Contacts protein L20.

This protein binds to 23S rRNA in the presence of protein L20. The sequence is that of Large ribosomal subunit protein bL21 from Sodalis glossinidius (strain morsitans).